A 62-amino-acid polypeptide reads, in one-letter code: Large ribosomal subunit protein bL28 (62 aa).

The segment at 1 to 26 (MARKCYVTGKSPKSGNNRSHALNKTK) is disordered. The span at 11-20 (SPKSGNNRSH) shows a compositional bias: polar residues.

It belongs to the bacterial ribosomal protein bL28 family.

This chain is Large ribosomal subunit protein bL28, found in Exiguobacterium sibiricum (strain DSM 17290 / CCUG 55495 / CIP 109462 / JCM 13490 / 255-15).